A 700-amino-acid polypeptide reads, in one-letter code: Non-hemolytic phospholipase C (700 aa).

The tat-type signal signal peptide spans 1 to 34; the sequence is MTNQNRRDFLRLAAGTAGAAALQLFPPVIREALA.

It belongs to the bacterial phospholipase C family. In terms of processing, predicted to be exported by the Tat system. The position of the signal peptide cleavage has not been experimentally proven.

It carries out the reaction a 1,2-diacyl-sn-glycero-3-phosphocholine + H2O = phosphocholine + a 1,2-diacyl-sn-glycerol + H(+). Hydrolyzes phosphatidylserine as well as phosphatidylcholine. The chain is Non-hemolytic phospholipase C (plcN) from Burkholderia pseudomallei (strain K96243).